We begin with the raw amino-acid sequence, 287 residues long: Phosphatidylglycerol--prolipoprotein diacylglyceryl transferase (287 aa).

Helical transmembrane passes span 15 to 35, 55 to 75, 90 to 110, and 117 to 137; these read IGPL…ILAI, FVMF…VFFE, IWEG…TAIV, and VSFW…QAIG. Arg-138 is an a 1,2-diacyl-sn-glycero-3-phospho-(1'-sn-glycerol) binding site. The next 2 helical transmembrane spans lie at 180–200 and 238–258; these read HPTF…LLLL and IIRT…IFII.

It belongs to the Lgt family.

It localises to the cell membrane. It carries out the reaction L-cysteinyl-[prolipoprotein] + a 1,2-diacyl-sn-glycero-3-phospho-(1'-sn-glycerol) = an S-1,2-diacyl-sn-glyceryl-L-cysteinyl-[prolipoprotein] + sn-glycerol 1-phosphate + H(+). It participates in protein modification; lipoprotein biosynthesis (diacylglyceryl transfer). Its function is as follows. Catalyzes the transfer of the diacylglyceryl group from phosphatidylglycerol to the sulfhydryl group of the N-terminal cysteine of a prolipoprotein, the first step in the formation of mature lipoproteins. In Oceanobacillus iheyensis (strain DSM 14371 / CIP 107618 / JCM 11309 / KCTC 3954 / HTE831), this protein is Phosphatidylglycerol--prolipoprotein diacylglyceryl transferase.